The sequence spans 495 residues: MNKNLHPLMLAGTGSDVGKSIIAAAFCRIFLQDGYHPAPFKAQNMALNSYATPEGLEIGRAQAVQAEAAGVPCHTDMNPLLLKPSSDHTSQVVLNGRPIGNRNAYEYFRREGREELRKEVHAAFDRLAARYNPVVMEGAGSISEINLRDSDLVNLPMAMHAGADVILVADIDRGGVFASVYGSVMLLRPEERKHIKGILINKFRGDIRLFESGVKMLEDLCGVPVVGVVPYYKDIYIEEEDSVMLQTKNIRAGQGKVNVAVVLLRHLSNFTDFNVLERDPRVHLFYTNNTDELMKADIILLPGSKSTLSDLYELRRNGVAQAIVRAHREGATVMGICGGYQLMGREVCDPDHVEGEIERLPGLGLLPVSTRMQGEKVTRQVRFRFLEDSAVCEGYEIHMGTTTPLADVPVSPLNHLADGREDGYFVDRTCMGTYVHGILDNPSVIDYLLEPFADKLKETAFDYKAFKEEQYDKLAAHVRKHVDLPLIYQILTDND.

The GATase cobBQ-type domain occupies 256 to 444 (KVNVAVVLLR…VHGILDNPSV (189 aa)). The active-site Nucleophile is Cys337. The active site involves His436.

It belongs to the CobB/CobQ family. CobQ subfamily.

Its pathway is cofactor biosynthesis; adenosylcobalamin biosynthesis. Its function is as follows. Catalyzes amidations at positions B, D, E, and G on adenosylcobyrinic A,C-diamide. NH(2) groups are provided by glutamine, and one molecule of ATP is hydrogenolyzed for each amidation. This Bacteroides fragilis (strain ATCC 25285 / DSM 2151 / CCUG 4856 / JCM 11019 / LMG 10263 / NCTC 9343 / Onslow / VPI 2553 / EN-2) protein is Cobyric acid synthase.